Here is an 83-residue protein sequence, read N- to C-terminus: MKGSAFAIILGLVVLCACSFAEDEQDQFASPNELLRSMFLESRHELIPEVEGRYCQKWMWTCDSERKCCEGYVCELWCKYNLG.

The first 21 residues, 1-21, serve as a signal peptide directing secretion; that stretch reads MKGSAFAIILGLVVLCACSFA. A propeptide spanning residues 22–53 is cleaved from the precursor; sequence EDEQDQFASPNELLRSMFLESRHELIPEVEGR. 3 disulfide bridges follow: C55–C69, C62–C74, and C68–C78. Residue L82 is modified to Leucine amide.

It belongs to the neurotoxin 30 (phrixotoxin) family. In terms of tissue distribution, expressed by the venom gland.

Its subcellular location is the secreted. Inhibits voltage-gated potassium channels of the subtype Kv4.1/KCND1 with high affinity and shows weak effects on Kv4.2/KCND2 and Kv2.1/KCNB1 subtypes. The toxin modifies the gating behavior of the channel and may interact with the S3-S4 extracellular loop. This is Kappa-theraphotoxin-Cg2a from Chilobrachys guangxiensis (Chinese earth tiger tarantula).